Reading from the N-terminus, the 368-residue chain is Apolipoprotein A-V (368 aa).

The signal sequence occupies residues Met1–Ala20. At Ser52 the chain carries Phosphoserine. The stretch at Thr231–Phe255 forms a coiled coil. Residues Glu305 to Ala333 are disordered.

This sequence belongs to the apolipoprotein A1/A4/E family. As to quaternary structure, interacts with GPIHBP1. Interacts with SORL1; this interaction leads to APOA5 internalization and sorting either to lysosomes and degradation, or to the trans-Golgi network. In terms of processing, phosphorylated by FAM20C in the extracellular medium. Liver.

Its subcellular location is the secreted. It localises to the early endosome. The protein localises to the late endosome. It is found in the golgi apparatus. The protein resides in the trans-Golgi network. In terms of biological role, minor apolipoprotein mainly associated with HDL and to a lesser extent with VLDL. May also be associated with chylomicrons. Important determinant of plasma triglyceride (TG) levels by both being a potent stimulator of apo-CII lipoprotein lipase (LPL) TG hydrolysis and an inhibitor of the hepatic VLDL-TG production rate (without affecting the VLDL-apoB production rate). Activates poorly lecithin:cholesterol acyltransferase (LCAT) and does not enhance efflux of cholesterol from macrophages. Binds heparin. The polypeptide is Apolipoprotein A-V (Apoa5) (Mus musculus (Mouse)).